Here is a 246-residue protein sequence, read N- to C-terminus: tRNA (guanine-N(1)-)-methyltransferase (246 aa).

S-adenosyl-L-methionine-binding positions include Gly-113 and 133-138; that span reads IGDYVL.

The protein belongs to the RNA methyltransferase TrmD family. In terms of assembly, homodimer.

Its subcellular location is the cytoplasm. The enzyme catalyses guanosine(37) in tRNA + S-adenosyl-L-methionine = N(1)-methylguanosine(37) in tRNA + S-adenosyl-L-homocysteine + H(+). Its function is as follows. Specifically methylates guanosine-37 in various tRNAs. The protein is tRNA (guanine-N(1)-)-methyltransferase of Yersinia pseudotuberculosis serotype O:1b (strain IP 31758).